Consider the following 112-residue polypeptide: Protein FAM32A (112 aa).

Residues 15 to 35 (KGCGDMSLGKKKKKKNKANDQ) form a disordered region.

The protein belongs to the FAM32 family.

It localises to the nucleus. May induce G2 arrest and apoptosis. May also increase cell sensitivity to apoptotic stimuli. The protein is Protein FAM32A (fam32a) of Xenopus tropicalis (Western clawed frog).